The sequence spans 446 residues: Butyryl-CoA:acetate CoA-transferase (446 aa).

Glycine 220 to methionine 224 contributes to the CoA binding site. Glutamate 245 functions as the 5-glutamyl coenzyme A thioester intermediate in the catalytic mechanism. CoA-binding residues include valine 320, glycine 343, and lysine 370.

It belongs to the acetyl-CoA hydrolase/transferase family. Butyryl-CoA CoA-transferase subfamily.

The catalysed reaction is butanoate + acetyl-CoA = butanoyl-CoA + acetate. The enzyme catalyses propanoate + acetyl-CoA = propanoyl-CoA + acetate. The protein operates within lipid metabolism; butanoate metabolism. Coenzyme A-transferase that converts butyryl-CoA to butyrate. Can also use proprionyl-CoA as substrate in vitro. This is Butyryl-CoA:acetate CoA-transferase from Anaerostipes caccae (strain DSM 14662 / CCUG 47493 / JCM 13470 / NCIMB 13811 / L1-92).